Reading from the N-terminus, the 83-residue chain is Small ribosomal subunit protein eS21 (83 aa).

It belongs to the eukaryotic ribosomal protein eS21 family. Component of the 40S small ribosomal subunit. Interacts with sta.

It is found in the cytoplasm. It localises to the cytosol. Its subcellular location is the rough endoplasmic reticulum. Functionally, may be an associated component of the ribosome rather than a core structural subunit. May act as a translation initiation factor. Has a role in regulation of cell proliferation in the hematopoietic organs and the imaginal disks of larva. In Drosophila grimshawi (Hawaiian fruit fly), this protein is Small ribosomal subunit protein eS21 (RpS21).